Consider the following 263-residue polypeptide: Small ribosomal subunit protein eS1 (263 aa).

Over residues H235–G254 the composition is skewed to basic and acidic residues. A disordered region spans residues H235–V263.

It belongs to the eukaryotic ribosomal protein eS1 family. Component of the small ribosomal subunit. Mature ribosomes consist of a small (40S) and a large (60S) subunit. The 40S subunit contains about 33 different proteins and 1 molecule of RNA (18S). The 60S subunit contains about 49 different proteins and 3 molecules of RNA (28S, 5.8S and 5S).

The protein resides in the cytoplasm. In Bombyx mandarina (Wild silk moth), this protein is Small ribosomal subunit protein eS1.